Reading from the N-terminus, the 329-residue chain is DNA-directed RNA polymerase subunit alpha (329 aa).

Positions 1–235 (MQGSVTEFLK…EQLDAFVDLR (235 aa)) are alpha N-terminal domain (alpha-NTD). The alpha C-terminal domain (alpha-CTD) stretch occupies residues 249–329 (FDPILLRPVD…NWPPASIAED (81 aa)).

This sequence belongs to the RNA polymerase alpha chain family. Homodimer. The RNAP catalytic core consists of 2 alpha, 1 beta, 1 beta' and 1 omega subunit. When a sigma factor is associated with the core the holoenzyme is formed, which can initiate transcription.

It catalyses the reaction RNA(n) + a ribonucleoside 5'-triphosphate = RNA(n+1) + diphosphate. Its function is as follows. DNA-dependent RNA polymerase catalyzes the transcription of DNA into RNA using the four ribonucleoside triphosphates as substrates. The chain is DNA-directed RNA polymerase subunit alpha from Photobacterium profundum (strain SS9).